Consider the following 1538-residue polypeptide: MVRECFTFLNIFVLHSIGSHVWFEDPEVAWIDGEVEKINGQEVVIQATTGKKVTAKLSKIYPKDVEAPAGGVDDMTKLSYLHEPGVLQNLKIRYELNEIYTYTGNILIAINPFQRLPHIYDAHMMQQYKGAPLGELSPHVFAVADVAYRAMINEGKSNSILVSGESGAGKTETTKMLMRYLAYLGGRAVTEGRTVEQQVLESNPVLEAFGNAKTVRNNNSSRFGKFVEIQFDKQGRISGAAIRTYLLERSRVCQISDPERNYHCFYLLCAAPQEEIEKYKLGHPKTFHYLNQSKCFELVGISDAHDYLATRRAMDIVGISEKEQEAIFRVVAAILHIGNIDFTKGKEVDSSVPKDEKSKFHLKTAAELLMCDLKALEDALCKRVMITPEEVIKRSLDPQSAVTSRDGLAKTVYSRLFDWLVDKINKSIGQDANSRSLIGVLDIYGFESFKTNSFEQFCINFTNEKLQQHFNQHVFKMEQEEYTKEAIDWSYIEFVDNQDVLDLIEKKPGGIVALLDEACMFPKSTHETFANKLYQTFKTHKRFIKPKLSRTDFAVAHYAGEVLYQSELFLDKNKDYVIPEHQDLLGASKCPFVVGLFPPLPEETSKSSKFSSIGSRFKLQLQQLMETLNCTEPHYIRCVKPNNLLKPAIFENVNIMQQLRCGGVLEAIRISCAGYPTRKPFFEFINRFGLLSPAALEGNFDEKVACQKILDNMGLKGYQIGKTKVFLRAGQMAELDARRAEVLSSAAKKIQRRIRTHQAQKRFIVLRKATISLQAICRGRLSCKHYDNLRREAAAVKIQKNGRRHYSRKSYKKLHVASLVVQTGLRAMAARKQFRFRKQTKAATIVQAQWRCHRAISYYKKLKNGVVLSQTRWRGRLAKRELRKLKMAARETGALKEAKDMLEKKVEELTYRVQLEKRSRGDLEEAKTQEILKLKSSFEEMRKKVDETNALLLKEREAAKKAAEEAPPVIKETQILVEDTKKIELMTEELESVKVTLENEKQRADDAVRKFEEAQESLEDKKKKLEETEKKGQQLQESLTRMEEKCSNLESENKVLRQQAVSMAPNKFLSGRSRSILQRGSESGHLAVDARSNLDLHSHSINHRDPSEVEDKPQKSLNEKQQENQDLLIRSIVQHLGFQGNRPITACIIYKCLLQWRSFEVERTSVFDRIIQTIGHAIETQDNNNTLAYWLSNTSTLLLLLQRTLKASGAAGMAPQRRRSSSATLFGRMSQSFRGAPPGVNLAMINGAAGGGADTFRQVEAKYPALLFKQQLTAYVEKIYGMIRDNLKKEISPLLGLCIQAPRTSRASLVKGASRSVGNTAAQQALIAHWQGIVKSLTNFLNTLKSNNVPSFLVRKVFTQIFSFINVQLFNSLLLRRECCSFSNGEYVKAGLSELEHWCFKATNEYAGSSWDELKHIRQAIGFLVVHQKPKKTLDEISHDLCPVLSIQQLYRISTMYWDDKYGTHSVSPDVIANMRVLMTEDSNNAVSNSFLLDDDSSIPFSVDDLSKSMEKFEIADIEPPPLIRENSGFSFLLPVSE.

The region spanning 16-65 (SIGSHVWFEDPEVAWIDGEVEKINGQEVVIQATTGKKVTAKLSKIYPKDV) is the Myosin N-terminal SH3-like domain. The region spanning 70-740 (GGVDDMTKLS…QMAELDARRA (671 aa)) is the Myosin motor domain. Residues 164 to 171 (GESGAGKT) and 217 to 225 (NNNSSRFGK) contribute to the ATP site. Actin-binding stretches follow at residues 503–537 (LIEK…YQTF), 539–562 (THKR…AGEV), 597–621 (FPPL…KLQL), and 621–643 (LQQL…KPNN). 6 IQ domains span residues 743 to 772 (LSSA…ATIS), 766 to 795 (LRKA…EAAA), 791 to 820 (REAA…ASLV), 814 to 843 (LHVA…TKAA), 839 to 868 (QTKA…GVVL), and 862 to 891 (LKNG…AARE). Residues 892–1064 (TGALKEAKDM…VLRQQAVSMA (173 aa)) are a coiled coil. The span at 1017 to 1032 (SLEDKKKKLEETEKKG) shows a compositional bias: basic and acidic residues. 2 disordered regions span residues 1017 to 1041 (SLED…SLTR) and 1098 to 1121 (SHSI…NEKQ). Positions 1168–1481 (DRIIQTIGHA…IANMRVLMTE (314 aa)) constitute a Dilute domain.

The protein belongs to the TRAFAC class myosin-kinesin ATPase superfamily. Myosin family. Plant myosin class XI subfamily. As to quaternary structure, homodimer.

Its function is as follows. Myosin heavy chain that is required for the cell cycle-regulated transport of various organelles and proteins for their segregation. Functions by binding with its tail domain to receptor proteins on organelles and exerting force with its N-terminal motor domain against actin filaments, thereby transporting its cargo along polarized actin cables. Involved in trafficking of Golgi stacks and mitochondria. The polypeptide is Myosin-9 (XI-C) (Arabidopsis thaliana (Mouse-ear cress)).